The chain runs to 378 residues: TelA-like protein SAV1406 (378 aa).

It belongs to the TelA family.

The sequence is that of TelA-like protein SAV1406 from Staphylococcus aureus (strain Mu50 / ATCC 700699).